The sequence spans 216 residues: ATP-dependent Clp protease proteolytic subunit 3 (216 aa).

S120 functions as the Nucleophile in the catalytic mechanism. H145 is a catalytic residue.

It belongs to the peptidase S14 family. In terms of assembly, fourteen ClpP subunits assemble into 2 heptameric rings which stack back to back to give a disk-like structure with a central cavity, resembling the structure of eukaryotic proteasomes.

The protein resides in the cytoplasm. The enzyme catalyses Hydrolysis of proteins to small peptides in the presence of ATP and magnesium. alpha-casein is the usual test substrate. In the absence of ATP, only oligopeptides shorter than five residues are hydrolyzed (such as succinyl-Leu-Tyr-|-NHMec, and Leu-Tyr-Leu-|-Tyr-Trp, in which cleavage of the -Tyr-|-Leu- and -Tyr-|-Trp bonds also occurs).. Cleaves peptides in various proteins in a process that requires ATP hydrolysis. Has a chymotrypsin-like activity. Plays a major role in the degradation of misfolded proteins. The protein is ATP-dependent Clp protease proteolytic subunit 3 of Prochlorococcus marinus (strain SARG / CCMP1375 / SS120).